We begin with the raw amino-acid sequence, 159 residues long: MEQNHQNLQSQFFIEHILQILPHRYPMLLIDRVVELEANKKIVAYKNITFNEDVFNGHFPDKPIFPGVLIVEGMAQTGGFLAFTSLWGFDPEIAKTKIVYFMTIDKVKFRIPVTPGDRLEYHLEVLKHKGMIWQVGGTAQVDGKVVAEAELKAMIAERD.

Residue His-58 is part of the active site.

This sequence belongs to the thioester dehydratase family. FabZ subfamily.

It is found in the cytoplasm. It catalyses the reaction a (3R)-hydroxyacyl-[ACP] = a (2E)-enoyl-[ACP] + H2O. Functionally, involved in unsaturated fatty acids biosynthesis. Catalyzes the dehydration of short chain beta-hydroxyacyl-ACPs and long chain saturated and unsaturated beta-hydroxyacyl-ACPs. This is 3-hydroxyacyl-[acyl-carrier-protein] dehydratase FabZ from Helicobacter pylori (strain Shi470).